Here is a 62-residue protein sequence, read N- to C-terminus: Large ribosomal subunit protein uL29 (62 aa).

The protein belongs to the universal ribosomal protein uL29 family.

This Desulfosudis oleivorans (strain DSM 6200 / JCM 39069 / Hxd3) (Desulfococcus oleovorans) protein is Large ribosomal subunit protein uL29.